A 229-amino-acid chain; its full sequence is Aldehyde oxidoreductase iron-sulfur-binding subunit PaoA (229 aa).

A disordered region spans residues 1–21 (MSNQGEYPEDNRVGKHEPHDL). Residues 1-53 (MSNQGEYPEDNRVGKHEPHDLSLTRRDLIKVSAATAAAAVVYPHSTLAASVPA) constitute a signal peptide (tat-type signal). A compositionally biased stretch (basic and acidic residues) spans 9–21 (EDNRVGKHEPHDL). Residues 61–137 (MPLTLKVNGK…GAEITTIEGL (77 aa)) enclose the 2Fe-2S ferredoxin-type domain. Residues Cys-99, Cys-104, Gly-105, Cys-107, Cys-119, Cys-158, Cys-161, Cys-208, and Cys-210 each coordinate [2Fe-2S] cluster.

As to quaternary structure, heterotrimer composed of PaoA, PaoB and PaoC. It depends on [2Fe-2S] cluster as a cofactor. In terms of processing, exported by the Tat system. The position of the signal peptide cleavage has not been experimentally proven.

Its subcellular location is the periplasm. The enzyme catalyses an aldehyde + A + H2O = a carboxylate + AH2 + H(+). In terms of biological role, oxidizes aldehydes to the corresponding carboxylic acids with a preference for aromatic aldehydes. It might play a role in the detoxification of aldehydes to avoid cell damage. This is Aldehyde oxidoreductase iron-sulfur-binding subunit PaoA from Escherichia coli O157:H7.